Reading from the N-terminus, the 290-residue chain is MSKINLEDLKSLSKETSAGLVHCKQALSEAHGDLTRAREILKELGHAVSVKKANRGARDGVVGALSSGKFGVILELNCETDFVARNEKFQQFAQSVLEAACAAKVKSVEECLSTPLPGGQKVRDAIVEQVAVFRENIVLSRCVTYEVSQSGLLGVYVHNKYTENLGKIGVAVAVVSEADPSFLSTVAKDIAIQVMSECPCAIDVARIPPNLLESEKHKYNLEVEGKPASVAEKIIAGKLSKFYKKVVLLEQPLFSDPERSVKQYISDKEMESSAKIDVVWYEVFVLGEAS.

Positions 80–83 (TDFV) are involved in Mg(2+) ion dislocation from EF-Tu.

It belongs to the EF-Ts family.

The protein localises to the cytoplasm. In terms of biological role, associates with the EF-Tu.GDP complex and induces the exchange of GDP to GTP. It remains bound to the aminoacyl-tRNA.EF-Tu.GTP complex up to the GTP hydrolysis stage on the ribosome. This is Elongation factor Ts from Neorickettsia sennetsu (strain ATCC VR-367 / Miyayama) (Ehrlichia sennetsu).